Reading from the N-terminus, the 259-residue chain is Ubiquinone/menaquinone biosynthesis C-methyltransferase UbiE (259 aa).

S-adenosyl-L-methionine contacts are provided by residues T82, D103, 131–132 (NA), and S148.

The protein belongs to the class I-like SAM-binding methyltransferase superfamily. MenG/UbiE family.

The enzyme catalyses a 2-demethylmenaquinol + S-adenosyl-L-methionine = a menaquinol + S-adenosyl-L-homocysteine + H(+). It catalyses the reaction a 2-methoxy-6-(all-trans-polyprenyl)benzene-1,4-diol + S-adenosyl-L-methionine = a 5-methoxy-2-methyl-3-(all-trans-polyprenyl)benzene-1,4-diol + S-adenosyl-L-homocysteine + H(+). It functions in the pathway quinol/quinone metabolism; menaquinone biosynthesis; menaquinol from 1,4-dihydroxy-2-naphthoate: step 2/2. The protein operates within cofactor biosynthesis; ubiquinone biosynthesis. Its function is as follows. Methyltransferase required for the conversion of demethylmenaquinol (DMKH2) to menaquinol (MKH2) and the conversion of 2-polyprenyl-6-methoxy-1,4-benzoquinol (DDMQH2) to 2-polyprenyl-3-methyl-6-methoxy-1,4-benzoquinol (DMQH2). This chain is Ubiquinone/menaquinone biosynthesis C-methyltransferase UbiE, found in Vibrio parahaemolyticus serotype O3:K6 (strain RIMD 2210633).